Consider the following 408-residue polypeptide: Imidazolonepropionase (408 aa).

2 residues coordinate Fe(3+): H73 and H75. Residues H73 and H75 each contribute to the Zn(2+) site. 4-imidazolone-5-propanoate-binding residues include R82, Y145, and H178. N-formimidoyl-L-glutamate is bound at residue Y145. Position 243 (H243) interacts with Fe(3+). H243 is a Zn(2+) binding site. Q246 contributes to the 4-imidazolone-5-propanoate binding site. D318 serves as a coordination point for Fe(3+). D318 lines the Zn(2+) pocket. 2 residues coordinate N-formimidoyl-L-glutamate: N320 and G322. S323 lines the 4-imidazolone-5-propanoate pocket.

The protein belongs to the metallo-dependent hydrolases superfamily. HutI family. Zn(2+) is required as a cofactor. Fe(3+) serves as cofactor.

It is found in the cytoplasm. It catalyses the reaction 4-imidazolone-5-propanoate + H2O = N-formimidoyl-L-glutamate. It participates in amino-acid degradation; L-histidine degradation into L-glutamate; N-formimidoyl-L-glutamate from L-histidine: step 3/3. Functionally, catalyzes the hydrolytic cleavage of the carbon-nitrogen bond in imidazolone-5-propanoate to yield N-formimidoyl-L-glutamate. It is the third step in the universal histidine degradation pathway. The chain is Imidazolonepropionase from Shewanella sediminis (strain HAW-EB3).